A 419-amino-acid polypeptide reads, in one-letter code: Gamma-glutamyl phosphate reductase (419 aa).

It belongs to the gamma-glutamyl phosphate reductase family.

The protein resides in the cytoplasm. The catalysed reaction is L-glutamate 5-semialdehyde + phosphate + NADP(+) = L-glutamyl 5-phosphate + NADPH + H(+). Its pathway is amino-acid biosynthesis; L-proline biosynthesis; L-glutamate 5-semialdehyde from L-glutamate: step 2/2. Catalyzes the NADPH-dependent reduction of L-glutamate 5-phosphate into L-glutamate 5-semialdehyde and phosphate. The product spontaneously undergoes cyclization to form 1-pyrroline-5-carboxylate. In Nitratidesulfovibrio vulgaris (strain ATCC 29579 / DSM 644 / CCUG 34227 / NCIMB 8303 / VKM B-1760 / Hildenborough) (Desulfovibrio vulgaris), this protein is Gamma-glutamyl phosphate reductase.